The primary structure comprises 288 residues: Alpha/beta hydrolase domain-containing protein 17B (288 aa).

Active-site charge relay system residues include Ser170, Asp235, and His264.

The protein belongs to the AB hydrolase superfamily. ABHD17 family. Post-translationally, palmitoylated on cysteine residues located in a cysteine cluster at the N-terminus which promotes membrane localization.

It is found in the cell membrane. It localises to the recycling endosome membrane. The protein resides in the cell projection. The protein localises to the dendritic spine. Its subcellular location is the postsynaptic density membrane. It catalyses the reaction S-hexadecanoyl-L-cysteinyl-[protein] + H2O = L-cysteinyl-[protein] + hexadecanoate + H(+). In terms of biological role, hydrolyzes fatty acids from S-acylated cysteine residues in proteins. Has depalmitoylating activity towards NRAS. The protein is Alpha/beta hydrolase domain-containing protein 17B of Gallus gallus (Chicken).